We begin with the raw amino-acid sequence, 158 residues long: S-ribosylhomocysteine lyase (158 aa).

Fe cation contacts are provided by histidine 54, histidine 58, and cysteine 124.

The protein belongs to the LuxS family. In terms of assembly, homodimer. Fe cation serves as cofactor.

It catalyses the reaction S-(5-deoxy-D-ribos-5-yl)-L-homocysteine = (S)-4,5-dihydroxypentane-2,3-dione + L-homocysteine. Its function is as follows. Involved in the synthesis of autoinducer 2 (AI-2) which is secreted by bacteria and is used to communicate both the cell density and the metabolic potential of the environment. The regulation of gene expression in response to changes in cell density is called quorum sensing. Catalyzes the transformation of S-ribosylhomocysteine (RHC) to homocysteine (HC) and 4,5-dihydroxy-2,3-pentadione (DPD). The polypeptide is S-ribosylhomocysteine lyase (Limosilactobacillus reuteri (strain DSM 20016) (Lactobacillus reuteri)).